A 569-amino-acid polypeptide reads, in one-letter code: Urease subunit alpha (569 aa).

The 439-residue stretch at 131–569 (GGVDAHIHFI…VAMAQRYFLF (439 aa)) folds into the Urease domain. Residues His-136, His-138, and Lys-219 each coordinate Ni(2+). N6-carboxylysine is present on Lys-219. Residue His-221 coordinates substrate. Residues His-248 and His-274 each contribute to the Ni(2+) site. The Proton donor role is filled by His-322. Asp-362 lines the Ni(2+) pocket.

The protein belongs to the metallo-dependent hydrolases superfamily. Urease alpha subunit family. In terms of assembly, heterotrimer of UreA (gamma), UreB (beta) and UreC (alpha) subunits. Three heterotrimers associate to form the active enzyme. The cofactor is Ni cation. In terms of processing, carboxylation allows a single lysine to coordinate two nickel ions.

It localises to the cytoplasm. It catalyses the reaction urea + 2 H2O + H(+) = hydrogencarbonate + 2 NH4(+). It functions in the pathway nitrogen metabolism; urea degradation; CO(2) and NH(3) from urea (urease route): step 1/1. The chain is Urease subunit alpha from Geobacillus kaustophilus (strain HTA426).